The sequence spans 471 residues: Methionine aminopeptidase 2 (471 aa).

Disordered regions lie at residues 16 to 80 (VVDD…IDRF) and 92 to 139 (CEHP…DFNR). The segment covering 32-47 (EDGDDNDDAVNEGEAV) has biased composition (acidic residues). Basic residues predominate over residues 52–65 (KKKKKKNKKKKKKG). Positions 119-139 (AEERAKDDAKHGSDDPLDFNR) are enriched in basic and acidic residues. Substrate is bound at residue histidine 224. A divalent metal cation contacts are provided by aspartate 244, aspartate 255, and histidine 324. Histidine 332 provides a ligand contact to substrate. A divalent metal cation is bound by residues glutamate 357 and glutamate 452.

It belongs to the peptidase M24A family. Methionine aminopeptidase eukaryotic type 2 subfamily. It depends on Co(2+) as a cofactor. Zn(2+) serves as cofactor. The cofactor is Mn(2+). Fe(2+) is required as a cofactor.

It localises to the cytoplasm. It carries out the reaction Release of N-terminal amino acids, preferentially methionine, from peptides and arylamides.. Its function is as follows. Cotranslationally removes the N-terminal methionine from nascent proteins. The N-terminal methionine is often cleaved when the second residue in the primary sequence is small and uncharged (Met-Ala-, Cys, Gly, Pro, Ser, Thr, or Val). This Yarrowia lipolytica (strain CLIB 122 / E 150) (Yeast) protein is Methionine aminopeptidase 2.